Here is a 646-residue protein sequence, read N- to C-terminus: MASGGAFCLIANDGKADKIILAQDLLNSRISNIKNVNKSYGKPDPEPTLSQIEETHLVHFNAHFKPYVPVGFEYNKVRPHTGTPTLGNKLTFGIPQYGDFFHDMVGHHILGACHSSWQDAPIQGTSQMGAHGQLQTFPRNGYDWDNQTPLEGAVYTLVDPFGRPIVPGTKNAYRNLVYYCEYPGERLYENVRFDVNGNSLDEYSSDVTTLVRKFCIPGDKMTGYKHLVGQEVSVEGTSGPLLCNIHDLHKPHQSKPILTDENDTQRTCSHTNPKFLSQHFPENSHNIQTAGKQDITPITDATYLDIRRNVHYSCNGPQTPKYYQPPLALWIKLRFWFNENVNLAIPSVSIPFGERFITIKLASQKDLVNEFPGLFVRQSRFIAGRPSRRNIRFKPWFIPGVINEISLTNNELYINNLFVTPEIHNLFVKRVRFSLIRVHKTQVTHTNNNHHDEKLMSALKWPIEYMFIGLKPTWNISDQNPHQHRDWHKFGHVVNAIMQPTHHAEISFQDRDTALPDACSSISDISPITYPITLPIIKNISVTAHGINLIDKFPSKFCSSYIPFHYGGNAIKTPDDPGAMMITFALKPREEYQPSGHINVSRAREFYISWDTDYVGSITTADLVVSASAINFLLLQNGSAVLRYST.

It belongs to the NCLDV major capsid protein family. As to quaternary structure, homotrimer. The membrane-bound form, but not the cytosolic one, assembles into large complexes. Interacts with the minor capsid proteins M1249L and p17; these interactions form a rigid zipper structure that stabilizes the capsomers.

The protein resides in the virion. It localises to the host endoplasmic reticulum membrane. It is found in the host cytoplasm. The protein localises to the host cytosol. Capsid protein that self-assembles to form the pseudo-hexameric capsomers of the icosahedral capsid. The capsid is constructed of 2760 pseudo-hexameric capsomers and 12 pentameric capsomers, with a T=277 symmetry, about 200 nm in diameter. The capsid encapsulates the DNA-containing nucleoid, the core shell and the inner membrane. Plays an essential role in virion assembly. Involved in virus attachment to the host cell. This is Major capsid protein from Ornithodoros (relapsing fever ticks).